The following is a 1522-amino-acid chain: Lysine-specific demethylase 5B (1522 aa).

Residues Cys-10 to Pro-51 enclose the JmjN domain. The ARID domain maps to Thr-75–Ser-165. The span at Asp-180–Pro-192 shows a compositional bias: basic and acidic residues. The tract at residues Asp-180 to Arg-229 is disordered. Residues Leu-284–Gln-334 form a PHD-type 1 zinc finger. Tyr-400 is a binding site for 2-oxoglutarate. Residues Glu-428 to Arg-594 form the JmjC domain. Fe cation-binding residues include His-474 and Glu-476. 2-oxoglutarate contacts are provided by Ser-482, Asn-484, and Lys-492. Residue His-562 participates in Fe cation binding. The C5HC2 zinc finger occupies Cys-667–Met-719. The PHD-type 2 zinc-finger motif lies at Leu-1151–Ser-1199. Over residues Leu-1353–Asn-1365 the composition is skewed to polar residues. Disordered regions lie at residues Leu-1353 to Gly-1373 and Ala-1400 to Asp-1460. A compositionally biased stretch (basic residues) spans Ala-1400–Ser-1416. Positions Arg-1426–Glu-1442 are enriched in basic and acidic residues. A PHD-type 3 zinc finger spans residues Asp-1462–Lys-1516.

It belongs to the JARID1 histone demethylase family. It depends on Fe(2+) as a cofactor.

It is found in the nucleus. It catalyses the reaction N(6),N(6),N(6)-trimethyl-L-lysyl(4)-[histone H3] + 3 2-oxoglutarate + 3 O2 = L-lysyl(4)-[histone H3] + 3 formaldehyde + 3 succinate + 3 CO2. Functionally, histone demethylase that demethylates 'Lys-4' of histone H3, thereby playing a central role in histone code. Does not demethylate histone H3 'Lys-9' or H3 'Lys-27'. Demethylates trimethylated, dimethylated and monomethylated H3 'Lys-4'. Acts as a transcriptional corepressor. May repress the CLOCK-BMAL1 heterodimer-mediated transcriptional activation of the core clock component PER2. This is Lysine-specific demethylase 5B (KDM5B) from Gallus gallus (Chicken).